We begin with the raw amino-acid sequence, 238 residues long: Tetrahydromethanopterin S-methyltransferase subunit A 1 (238 aa).

Topologically, residues 2 to 218 (VEKKSPAEGW…RMFAGMYSGK (217 aa)) are cytoplasmic. His84 is a binding site for 5-hydroxybenzimidazolylcob(I)amide. Residues 219–237 (VQGIMIGLAFTLTLGILLL) form a helical membrane-spanning segment. Position 238 (Val238) is a topological domain, extracellular.

It belongs to the MtrA family. In terms of assembly, the complex is composed of 8 subunits; MtrA, MtrB, MtrC, MtrD, MtrE, MtrF, MtrG and MtrH. It depends on 5-hydroxybenzimidazolylcob(I)amide as a cofactor.

It is found in the cell membrane. It catalyses the reaction 5-methyl-5,6,7,8-tetrahydromethanopterin + coenzyme M + 2 Na(+)(in) = 5,6,7,8-tetrahydromethanopterin + methyl-coenzyme M + 2 Na(+)(out). Its pathway is one-carbon metabolism; methanogenesis from CO(2); methyl-coenzyme M from 5,10-methylene-5,6,7,8-tetrahydromethanopterin: step 2/2. In terms of biological role, part of a complex that catalyzes the formation of methyl-coenzyme M and tetrahydromethanopterin from coenzyme M and methyl-tetrahydromethanopterin. This is an energy-conserving, sodium-ion translocating step. In Methanothermobacter thermautotrophicus (strain ATCC 29096 / DSM 1053 / JCM 10044 / NBRC 100330 / Delta H) (Methanobacterium thermoautotrophicum), this protein is Tetrahydromethanopterin S-methyltransferase subunit A 1.